We begin with the raw amino-acid sequence, 151 residues long: Small ribosomal subunit protein uS11 (151 aa).

Position 16 is a phosphoserine (serine 16). Residues lysine 61, lysine 63, and lysine 106 each participate in a glycyl lysine isopeptide (Lys-Gly) (interchain with G-Cter in SUMO2) cross-link. The interval 131-151 (DVTPIPSDSTRRKGGRRGRRL) is disordered. Residue threonine 133 is modified to Phosphothreonine. Serine 139 carries the phosphoserine modification. Residues 142-151 (RKGGRRGRRL) are compositionally biased toward basic residues.

Belongs to the universal ribosomal protein uS11 family. Component of the small ribosomal subunit. Part of the small subunit (SSU) processome, composed of more than 70 proteins and the RNA chaperone small nucleolar RNA (snoRNA) U3.

It is found in the cytoplasm. Its subcellular location is the nucleus. It localises to the nucleolus. In terms of biological role, component of the small ribosomal subunit. The ribosome is a large ribonucleoprotein complex responsible for the synthesis of proteins in the cell. Part of the small subunit (SSU) processome, first precursor of the small eukaryotic ribosomal subunit. During the assembly of the SSU processome in the nucleolus, many ribosome biogenesis factors, an RNA chaperone and ribosomal proteins associate with the nascent pre-rRNA and work in concert to generate RNA folding, modifications, rearrangements and cleavage as well as targeted degradation of pre-ribosomal RNA by the RNA exosome. This chain is Small ribosomal subunit protein uS11 (Rps14), found in Mus musculus (Mouse).